Reading from the N-terminus, the 218-residue chain is CTD kinase subunit gamma (218 aa).

The region spanning 2 to 138 (DPFEGRMTFL…DAMATVEAHE (137 aa)) is the CID domain. The tract at residues 137–157 (HEQASKSGDTSTSGAISKNDI) is disordered. The span at 141-152 (SKSGDTSTSGAI) shows a compositional bias: polar residues.

The protein belongs to the CTK3 family. As to quaternary structure, CTDK-I consists of three subunits, ctk1/lsk1, ctk2/lsc1 and ctk3 (also called alpha, beta and gamma).

Its subcellular location is the cytoplasm. It localises to the nucleus. In terms of biological role, subunit of the CTDK-I complex, which hyperphosphorylates the C-terminal heptapeptide repeat domain (CTD) of the largest RNA polymerase II subunit. As part of the CTDK-I complex, involved in RNA polymerase II transcriptional elongation and pre-mRNA 3'-end processing. Together with ctk2, required for ctk1/lsk1 CTD kinase activation. In Schizosaccharomyces pombe (strain 972 / ATCC 24843) (Fission yeast), this protein is CTD kinase subunit gamma.